The chain runs to 537 residues: Glutamate--tRNA ligase (537 aa).

The 'HIGH' region signature appears at Pro9–Gly19. Zn(2+) is bound by residues Cys125, Cys127, Cys152, and Glu154. The 'KMSKS' region signature appears at Lys270–Arg274. Lys273 contacts ATP.

The protein belongs to the class-I aminoacyl-tRNA synthetase family. Glutamate--tRNA ligase type 1 subfamily. Monomer. It depends on Zn(2+) as a cofactor.

It is found in the cytoplasm. It catalyses the reaction tRNA(Glu) + L-glutamate + ATP = L-glutamyl-tRNA(Glu) + AMP + diphosphate. Functionally, catalyzes the attachment of glutamate to tRNA(Glu) in a two-step reaction: glutamate is first activated by ATP to form Glu-AMP and then transferred to the acceptor end of tRNA(Glu). The protein is Glutamate--tRNA ligase of Treponema pallidum (strain Nichols).